The following is a 360-amino-acid chain: Peptide chain release factor 1 (360 aa).

Glutamine 235 carries the N5-methylglutamine modification.

Belongs to the prokaryotic/mitochondrial release factor family. Post-translationally, methylated by PrmC. Methylation increases the termination efficiency of RF1.

The protein localises to the cytoplasm. In terms of biological role, peptide chain release factor 1 directs the termination of translation in response to the peptide chain termination codons UAG and UAA. The sequence is that of Peptide chain release factor 1 from Burkholderia vietnamiensis (strain G4 / LMG 22486) (Burkholderia cepacia (strain R1808)).